Here is a 436-residue protein sequence, read N- to C-terminus: Probable ABC transporter binding protein NosD (436 aa).

Residues 1 to 27 (MFKAQATFSRYSAAVSLLLLFSGAAQA) form the signal peptide. PbH1 repeat units lie at residues 85-113 (APDV…FILP), 115-136 (AERA…FVDG), 137-166 (TRDV…HLFA), 167-188 (VSGA…YIDT), 189-210 (SNGN…HYMF), 233-255 (SRKL…LMNY), 293-314 (SLFN…HLTA), and 316-354 (SEDN…YWSD).

This sequence belongs to the NosD family. In terms of assembly, the complex may be composed of an ATP-binding protein (NosF), a transmembrane protein (NosY) and a solute-binding protein (NosD).

Its subcellular location is the periplasm. Its function is as follows. Required for the assembly of the copper chromophores of nitrous oxide reductase. Could be part of the ABC transporter complex NosDFY. The chain is Probable ABC transporter binding protein NosD from Stutzerimonas stutzeri (Pseudomonas stutzeri).